Consider the following 242-residue polypeptide: MKRMQETSFLFGSKAFLEALDNQLQIKKVNLSDKHQKLLGLIKKRGLRYEMHSSQWFHQQFRHINHQEFVCVINPNQMLKTIEQLIQITDSKSTSTLVMLHEIQDPHNFGAILRTCMAAEVDGIIFKKHNQAPINSTVIRTSMGTVFYQNLVQVTNLSYAITTLQKHGFWTVATTLDERLKPKDYRQVDFDKRILLVGNEDKGLNALLLKNADLKVKIPMNPKLNSLNVSVAVGIILFGWKS.

The S-adenosyl-L-methionine site is built by G198, I218, and L227.

This sequence belongs to the class IV-like SAM-binding methyltransferase superfamily. RNA methyltransferase TrmH family.

This is an uncharacterized protein from Mycoplasma pneumoniae (strain ATCC 29342 / M129 / Subtype 1) (Mycoplasmoides pneumoniae).